The chain runs to 93 residues: Small ribosomal subunit protein uS19 (93 aa).

Belongs to the universal ribosomal protein uS19 family.

Its function is as follows. Protein S19 forms a complex with S13 that binds strongly to the 16S ribosomal RNA. The sequence is that of Small ribosomal subunit protein uS19 from Nautilia profundicola (strain ATCC BAA-1463 / DSM 18972 / AmH).